The chain runs to 153 residues: NAD(P)H-quinone oxidoreductase subunit N (153 aa).

Belongs to the complex I NdhN subunit family. NDH-1 can be composed of about 15 different subunits; different subcomplexes with different compositions have been identified which probably have different functions.

The protein resides in the cellular thylakoid membrane. The enzyme catalyses a plastoquinone + NADH + (n+1) H(+)(in) = a plastoquinol + NAD(+) + n H(+)(out). It carries out the reaction a plastoquinone + NADPH + (n+1) H(+)(in) = a plastoquinol + NADP(+) + n H(+)(out). Its function is as follows. NDH-1 shuttles electrons from an unknown electron donor, via FMN and iron-sulfur (Fe-S) centers, to quinones in the respiratory and/or the photosynthetic chain. The immediate electron acceptor for the enzyme in this species is believed to be plastoquinone. Couples the redox reaction to proton translocation, and thus conserves the redox energy in a proton gradient. Cyanobacterial NDH-1 also plays a role in inorganic carbon-concentration. In Synechococcus sp. (strain RCC307), this protein is NAD(P)H-quinone oxidoreductase subunit N.